Here is a 294-residue protein sequence, read N- to C-terminus: ATP synthase gamma chain (294 aa).

This sequence belongs to the ATPase gamma chain family. F-type ATPases have 2 components, CF(1) - the catalytic core - and CF(0) - the membrane proton channel. CF(1) has five subunits: alpha(3), beta(3), gamma(1), delta(1), epsilon(1). CF(0) has three main subunits: a, b and c.

It is found in the cell inner membrane. Functionally, produces ATP from ADP in the presence of a proton gradient across the membrane. The gamma chain is believed to be important in regulating ATPase activity and the flow of protons through the CF(0) complex. The chain is ATP synthase gamma chain from Campylobacter jejuni (strain RM1221).